A 139-amino-acid chain; its full sequence is Peptide methionine sulfoxide reductase B5 (139 aa).

Position 2 is an N-acetylalanine (alanine 2). The MsrB domain occupies 12-133; that stretch reads EEEWRAVLSP…NSVSISFNPA (122 aa). Zn(2+) contacts are provided by cysteine 51, cysteine 54, cysteine 97, and cysteine 100. Cysteine 69 and cysteine 122 form a disulfide bridge. Cysteine 122 serves as the catalytic Nucleophile.

This sequence belongs to the MsrB Met sulfoxide reductase family. It depends on Zn(2+) as a cofactor.

Its subcellular location is the cytoplasm. The protein localises to the cytosol. It carries out the reaction L-methionyl-[protein] + [thioredoxin]-disulfide + H2O = L-methionyl-(R)-S-oxide-[protein] + [thioredoxin]-dithiol. Its function is as follows. Catalyzes the reduction of methionine sulfoxide (MetSO) to methionine in proteins. Plays a protective role against oxidative stress by restoring activity to proteins that have been inactivated by methionine oxidation. MSRB family specifically reduces the MetSO R-enantiomer. The sequence is that of Peptide methionine sulfoxide reductase B5 (MSRB5) from Arabidopsis thaliana (Mouse-ear cress).